A 329-amino-acid chain; its full sequence is MAVPPVEMYSGSFWNRMRKPLPLRTQVIRFTVVFVIVSFILAVALQITHERMPDPKVTKPLPDLGFELLTKVPGMYVLADCCIGFLNILSVFTAFKLYLLHRHCVGSGEPELPCNIPGVSRFFLSVWLCKENCRIELRNIHTIAWIRFITSYALLLLFRSAVIVMTSLPAPDDLCQNPPKIENPVKNVILTVLTAGAGSIHCGDLMYSGHTVILTLHLMFHWIYGAMVHWSFRPVVTVVAIFGYYCIVASRFHYTDDVLVAIYLTIATFIAVGHNADGAPWQLQLFIRWWPCCGANSREVTEDSQPVMVAFKSEAAGQSSRKVVDERNH.

The Cytoplasmic segment spans residues 1–26; that stretch reads MAVPPVEMYSGSFWNRMRKPLPLRTQ. A helical membrane pass occupies residues 27-47; the sequence is VIRFTVVFVIVSFILAVALQI. Residues 48 to 74 lie on the Extracellular side of the membrane; sequence THERMPDPKVTKPLPDLGFELLTKVPG. Residues 75–95 traverse the membrane as a helical segment; sequence MYVLADCCIGFLNILSVFTAF. Residues 96–147 are Cytoplasmic-facing; sequence KLYLLHRHCVGSGEPELPCNIPGVSRFFLSVWLCKENCRIELRNIHTIAWIR. The helical transmembrane segment at 148 to 168 threads the bilayer; that stretch reads FITSYALLLLFRSAVIVMTSL. Topologically, residues 169–211 are extracellular; the sequence is PAPDDLCQNPPKIENPVKNVILTVLTAGAGSIHCGDLMYSGHT. A helical transmembrane segment spans residues 212–232; sequence VILTLHLMFHWIYGAMVHWSF. Position 233 (R233) is a topological domain, cytoplasmic. A helical membrane pass occupies residues 234 to 254; the sequence is PVVTVVAIFGYYCIVASRFHY. Over 255 to 257 the chain is Extracellular; that stretch reads TDD. Residues 258 to 278 form a helical membrane-spanning segment; it reads VLVAIYLTIATFIAVGHNADG. Residues 279-329 lie on the Cytoplasmic side of the membrane; that stretch reads APWQLQLFIRWWPCCGANSREVTEDSQPVMVAFKSEAAGQSSRKVVDERNH.

Belongs to the sphingomyelin synthase family.

Its subcellular location is the membrane. It catalyses the reaction an N-acylsphing-4-enine + a 1,2-diacyl-sn-glycero-3-phosphocholine = a sphingomyelin + a 1,2-diacyl-sn-glycerol. It carries out the reaction an N-acylsphinganine + a 1,2-diacyl-sn-glycero-3-phosphocholine = an N-acylsphinganine-1-phosphocholine + a 1,2-diacyl-sn-glycerol. The catalysed reaction is an N-acylsphing-4-enine + a 1,2-diacyl-sn-glycero-3-phosphoethanolamine = an N-acylsphing-4-enine 1-phosphoethanolamine + a 1,2-diacyl-sn-glycerol. The enzyme catalyses an N-acylsphinganine + a 1,2-diacyl-sn-glycero-3-phosphoethanolamine = an N-acylsphinganine-1-phosphoethanolamine + a 1,2-diacyl-sn-glycerol. Bifunctional sphingomyelin (SM)/ethanolamine phosphorylceramide (EPC) synthase with minimal inositol phosphorylceramide (IPC) synthase activity. Specificity is likely to be defined by residues in the lumenal catalytic domain that interact with the polar head groups of the phospholipid donors. SM is synthesized by both stages of the parasite life cycle, bloodstream forms (BSF) and procyclic forms (PCF), by transferring the phosphocholine from a 1,2-diacyl-sn-glycero-3-phosphocholine to an N-acylsphing-4-enine (ceramide) or an N-acylsphinganine (dihydroceramide). Similarly, EPC is synthesized by transferring phosphoethanolamine from a 1,2-diacyl-sn-glycero-3-phosphoethanolamine to ceramide or dihydroceramide by BSF and PCF, while IPC is confined to PCF. The ceramide/dihydroceramide ratios are skewed towards dihydroceramide in PCF parasites and ceramide in BSF parasites, this is likely due to differential expression and/or regulation of dihydroceramide desaturase, the enzyme responsible for converting dihydroceramide to ceramide. The polypeptide is Phosphatidylcholine:ceramide cholinephosphotransferase 3 (Trypanosoma brucei brucei).